The following is a 143-amino-acid chain: Large ribosomal subunit protein uL13 (143 aa).

It belongs to the universal ribosomal protein uL13 family. In terms of assembly, part of the 50S ribosomal subunit.

Functionally, this protein is one of the early assembly proteins of the 50S ribosomal subunit, although it is not seen to bind rRNA by itself. It is important during the early stages of 50S assembly. The protein is Large ribosomal subunit protein uL13 of Dehalococcoides mccartyi (strain CBDB1).